The chain runs to 496 residues: Solute carrier family 2, facilitated glucose transporter member 11 (496 aa).

Over 1–11 (MRALRRLIQGR) the chain is Cytoplasmic. The helical transmembrane segment at 12 to 32 (ILLLTICAAGIGGTFQFGYNL) threads the bilayer. Topologically, residues 33 to 61 (SIINAPTLHIQEFTNETWQARTGEPLPDH) are extracellular. N47 carries N-linked (GlcNAc...) asparagine glycosylation. Residues 62–82 (LVLLMWSLIVSLYPLGGLFGA) form a helical membrane-spanning segment. The Cytoplasmic portion of the chain corresponds to 83–97 (LLAGPLAITLGRKKS). The chain crosses the membrane as a helical span at residues 98-118 (LLVNNIFVVSAAILFGFSRKA). Over 119–128 (GSFEMIMLGR) the chain is Extracellular. The chain crosses the membrane as a helical span at residues 129–149 (LLVGVNAGVSMNIQPMYLGES). The Cytoplasmic segment spans residues 150 to 157 (APKELRGA). Residues 158-178 (VAMSSAIFTALGIVMGQVVGL) form a helical membrane-spanning segment. The Extracellular segment spans residues 179 to 187 (RELLGGPQA). Residues 188–208 (WPLLLASCLVPGALQLASLPL) form a helical membrane-spanning segment. Residues 209–273 (LPESPRYLLI…LFQHRALRRQ (65 aa)) lie on the Cytoplasmic side of the membrane. A helical transmembrane segment spans residues 274–294 (VTSLVVLGSAMELCGNDSVYA). The Extracellular segment spans residues 295–311 (YASSVFRKAGVPEAKIQ). A helical membrane pass occupies residues 312 to 332 (YAIIGTGSCELLTAVVSCVVI). Topologically, residues 333-338 (ERVGRR) are cytoplasmic. The chain crosses the membrane as a helical span at residues 339-359 (VLLIGGYSLMTCWGSIFTVAL). Over 360–364 (CLQSS) the chain is Extracellular. A helical transmembrane segment spans residues 365–385 (FPWTLYLAMACIFAFILSFGI). Over 386-408 (GPAGVTGILATELFDQMARPAAC) the chain is Cytoplasmic. Residues 409-429 (MVCGALMWIMLILVGLGFPFI) form a helical membrane-spanning segment. Topologically, residues 430–435 (MEALSH) are extracellular. Residues 436 to 456 (FLYVPFLGVCVCGAIYTGLFL) traverse the membrane as a helical segment. The Cytoplasmic segment spans residues 457–496 (PETKGKTFQEISKELHRLNFPRRAQGPTWRSLEVIQSTEL).

The protein belongs to the major facilitator superfamily. Sugar transporter (TC 2.A.1.1) family. Glucose transporter subfamily. Expressed in heart and skeletal muscle.

It is found in the cell membrane. The catalysed reaction is D-glucose(out) = D-glucose(in). In terms of biological role, facilitative glucose transporter. The chain is Solute carrier family 2, facilitated glucose transporter member 11 from Homo sapiens (Human).